The sequence spans 369 residues: Phospho-N-acetylmuramoyl-pentapeptide-transferase (369 aa).

10 consecutive transmembrane segments (helical) span residues 2 to 22 (IALL…TPLF), 55 to 75 (TVVV…MWMM), 86 to 106 (GLLL…DDFI), 120 to 140 (AKLI…LQFP), 163 to 183 (LAFG…NLII), 196 to 216 (LDGL…IMGI), 239 to 259 (PMDL…FLWW), 266 to 286 (IFMG…FAIL), 291 to 311 (LLLA…IIQV), and 348 to 368 (ILAG…WVVL).

Belongs to the glycosyltransferase 4 family. MraY subfamily. Mg(2+) is required as a cofactor.

It is found in the cell membrane. It catalyses the reaction UDP-N-acetyl-alpha-D-muramoyl-L-alanyl-gamma-D-glutamyl-meso-2,6-diaminopimeloyl-D-alanyl-D-alanine + di-trans,octa-cis-undecaprenyl phosphate = di-trans,octa-cis-undecaprenyl diphospho-N-acetyl-alpha-D-muramoyl-L-alanyl-D-glutamyl-meso-2,6-diaminopimeloyl-D-alanyl-D-alanine + UMP. The protein operates within cell wall biogenesis; peptidoglycan biosynthesis. In terms of biological role, catalyzes the initial step of the lipid cycle reactions in the biosynthesis of the cell wall peptidoglycan: transfers peptidoglycan precursor phospho-MurNAc-pentapeptide from UDP-MurNAc-pentapeptide onto the lipid carrier undecaprenyl phosphate, yielding undecaprenyl-pyrophosphoryl-MurNAc-pentapeptide, known as lipid I. The polypeptide is Phospho-N-acetylmuramoyl-pentapeptide-transferase (Paenarthrobacter aurescens (strain TC1)).